Consider the following 194-residue polypeptide: MKIGILALQGAFAEHAKVLDQLGVESVELRNLDDFQQDQSDLSGLILPGGESTTMGKLLRDQNMLLPIREAILSGLPVFGTCAGLILLAKEITSQKESHLGTMDMVVERNAYGRQLGSFYTEAECKGVGKIPMTFIRGPIISSVGEDVEILATVDNQIVAAQEKNMLVTSFHPELTDDAHLHQYFIEMCKEKRQ.

50 to 52 provides a ligand contact to L-glutamine; sequence GES. Cys82 acts as the Nucleophile in catalysis. L-glutamine is bound by residues Arg109 and 136–137; that span reads IR. Active-site charge relay system residues include His172 and Glu174.

The protein belongs to the glutaminase PdxT/SNO family. In terms of assembly, in the presence of PdxS, forms a dodecamer of heterodimers. Only shows activity in the heterodimer.

The catalysed reaction is aldehydo-D-ribose 5-phosphate + D-glyceraldehyde 3-phosphate + L-glutamine = pyridoxal 5'-phosphate + L-glutamate + phosphate + 3 H2O + H(+). The enzyme catalyses L-glutamine + H2O = L-glutamate + NH4(+). It functions in the pathway cofactor biosynthesis; pyridoxal 5'-phosphate biosynthesis. Functionally, catalyzes the hydrolysis of glutamine to glutamate and ammonia as part of the biosynthesis of pyridoxal 5'-phosphate. The resulting ammonia molecule is channeled to the active site of PdxS. The polypeptide is Pyridoxal 5'-phosphate synthase subunit PdxT (Streptococcus pneumoniae (strain CGSP14)).